The primary structure comprises 167 residues: Ribosome maturation factor RimM (167 aa).

A PRC barrel domain is found at 92 to 166; it reads DGVYYYRELL…EVRVELMEGL (75 aa).

This sequence belongs to the RimM family. In terms of assembly, binds ribosomal protein uS19.

It localises to the cytoplasm. Its function is as follows. An accessory protein needed during the final step in the assembly of 30S ribosomal subunit, possibly for assembly of the head region. Essential for efficient processing of 16S rRNA. May be needed both before and after RbfA during the maturation of 16S rRNA. It has affinity for free ribosomal 30S subunits but not for 70S ribosomes. The sequence is that of Ribosome maturation factor RimM from Lactobacillus delbrueckii subsp. bulgaricus (strain ATCC 11842 / DSM 20081 / BCRC 10696 / JCM 1002 / NBRC 13953 / NCIMB 11778 / NCTC 12712 / WDCM 00102 / Lb 14).